The sequence spans 264 residues: Thymidylate synthase (264 aa).

Arg21 is a dUMP binding site. His51 contributes to the (6R)-5,10-methylene-5,6,7,8-tetrahydrofolate binding site. 126–127 serves as a coordination point for dUMP; it reads RR. The Nucleophile role is filled by Cys146. DUMP-binding positions include 166–169, Asn177, and 207–209; these read RSAD and HLY. Asp169 is a binding site for (6R)-5,10-methylene-5,6,7,8-tetrahydrofolate. Residue Ala263 coordinates (6R)-5,10-methylene-5,6,7,8-tetrahydrofolate.

Belongs to the thymidylate synthase family. Bacterial-type ThyA subfamily. In terms of assembly, homodimer.

The protein resides in the cytoplasm. The catalysed reaction is dUMP + (6R)-5,10-methylene-5,6,7,8-tetrahydrofolate = 7,8-dihydrofolate + dTMP. It participates in pyrimidine metabolism; dTTP biosynthesis. Its function is as follows. Catalyzes the reductive methylation of 2'-deoxyuridine-5'-monophosphate (dUMP) to 2'-deoxythymidine-5'-monophosphate (dTMP) while utilizing 5,10-methylenetetrahydrofolate (mTHF) as the methyl donor and reductant in the reaction, yielding dihydrofolate (DHF) as a by-product. This enzymatic reaction provides an intracellular de novo source of dTMP, an essential precursor for DNA biosynthesis. The chain is Thymidylate synthase from Bartonella bacilliformis (strain ATCC 35685 / KC583 / Herrer 020/F12,63).